The sequence spans 77 residues: Translation initiation factor IF-1, chloroplastic (77 aa).

Residues 1–71 (MKEQKLIHEG…TRGRIIYRLR (71 aa)) enclose the S1-like domain.

The protein belongs to the IF-1 family. In terms of assembly, component of the 30S ribosomal translation pre-initiation complex which assembles on the 30S ribosome in the order IF-2 and IF-3, IF-1 and N-formylmethionyl-tRNA(fMet); mRNA recruitment can occur at any time during PIC assembly.

Its subcellular location is the plastid. The protein resides in the chloroplast. Its function is as follows. One of the essential components for the initiation of protein synthesis. Stabilizes the binding of IF-2 and IF-3 on the 30S subunit to which N-formylmethionyl-tRNA(fMet) subsequently binds. Helps modulate mRNA selection, yielding the 30S pre-initiation complex (PIC). Upon addition of the 50S ribosomal subunit IF-1, IF-2 and IF-3 are released leaving the mature 70S translation initiation complex. In Ceratophyllum demersum (Rigid hornwort), this protein is Translation initiation factor IF-1, chloroplastic.